The primary structure comprises 209 residues: Thymidylate kinase (209 aa).

Glycine 10–serine 17 is a binding site for ATP.

It belongs to the thymidylate kinase family.

The catalysed reaction is dTMP + ATP = dTDP + ADP. Functionally, phosphorylation of dTMP to form dTDP in both de novo and salvage pathways of dTTP synthesis. The polypeptide is Thymidylate kinase (Photobacterium profundum (strain SS9)).